The primary structure comprises 570 residues: Proline--tRNA ligase (570 aa).

Belongs to the class-II aminoacyl-tRNA synthetase family. ProS type 1 subfamily. As to quaternary structure, homodimer.

The protein localises to the cytoplasm. The enzyme catalyses tRNA(Pro) + L-proline + ATP = L-prolyl-tRNA(Pro) + AMP + diphosphate. Its function is as follows. Catalyzes the attachment of proline to tRNA(Pro) in a two-step reaction: proline is first activated by ATP to form Pro-AMP and then transferred to the acceptor end of tRNA(Pro). As ProRS can inadvertently accommodate and process non-cognate amino acids such as alanine and cysteine, to avoid such errors it has two additional distinct editing activities against alanine. One activity is designated as 'pretransfer' editing and involves the tRNA(Pro)-independent hydrolysis of activated Ala-AMP. The other activity is designated 'posttransfer' editing and involves deacylation of mischarged Ala-tRNA(Pro). The misacylated Cys-tRNA(Pro) is not edited by ProRS. The sequence is that of Proline--tRNA ligase from Clostridium perfringens (strain ATCC 13124 / DSM 756 / JCM 1290 / NCIMB 6125 / NCTC 8237 / Type A).